The sequence spans 346 residues: L-threonine 3-dehydrogenase (346 aa).

Residue C42 coordinates Zn(2+). Catalysis depends on charge relay system residues T44 and H47. Residues H67, E68, C97, C100, C103, and C111 each coordinate Zn(2+). NAD(+) contacts are provided by residues I179, D199, R204, 266-268 (LSL), and 291-292 (IT).

Belongs to the zinc-containing alcohol dehydrogenase family. Homotetramer. The cofactor is Zn(2+).

It is found in the cytoplasm. The enzyme catalyses L-threonine + NAD(+) = (2S)-2-amino-3-oxobutanoate + NADH + H(+). Its pathway is amino-acid degradation; L-threonine degradation via oxydo-reductase pathway; glycine from L-threonine: step 1/2. Its function is as follows. Catalyzes the NAD(+)-dependent oxidation of L-threonine to 2-amino-3-ketobutyrate. This chain is L-threonine 3-dehydrogenase, found in Bacillus licheniformis (strain ATCC 14580 / DSM 13 / JCM 2505 / CCUG 7422 / NBRC 12200 / NCIMB 9375 / NCTC 10341 / NRRL NRS-1264 / Gibson 46).